Here is a 185-residue protein sequence, read N- to C-terminus: Ribosome-recycling factor (185 aa).

This sequence belongs to the RRF family.

The protein resides in the cytoplasm. In terms of biological role, responsible for the release of ribosomes from messenger RNA at the termination of protein biosynthesis. May increase the efficiency of translation by recycling ribosomes from one round of translation to another. This chain is Ribosome-recycling factor, found in Thermomicrobium roseum (strain ATCC 27502 / DSM 5159 / P-2).